We begin with the raw amino-acid sequence, 150 residues long: 3-dehydroquinate dehydratase (150 aa).

Residue Tyr26 is the Proton acceptor of the active site. 3 residues coordinate substrate: Asn77, His83, and Asp90. The active-site Proton donor is the His103. Substrate contacts are provided by residues 104 to 105 (LS) and Arg114.

This sequence belongs to the type-II 3-dehydroquinase family. Homododecamer.

The enzyme catalyses 3-dehydroquinate = 3-dehydroshikimate + H2O. The protein operates within metabolic intermediate biosynthesis; chorismate biosynthesis; chorismate from D-erythrose 4-phosphate and phosphoenolpyruvate: step 3/7. In terms of biological role, catalyzes a trans-dehydration via an enolate intermediate. This is 3-dehydroquinate dehydratase from Enterobacter sp. (strain 638).